A 347-amino-acid polypeptide reads, in one-letter code: Protein RecA (347 aa).

67–74 (GPESSGKT) serves as a coordination point for ATP.

The protein belongs to the RecA family.

The protein resides in the cytoplasm. Functionally, can catalyze the hydrolysis of ATP in the presence of single-stranded DNA, the ATP-dependent uptake of single-stranded DNA by duplex DNA, and the ATP-dependent hybridization of homologous single-stranded DNAs. It interacts with LexA causing its activation and leading to its autocatalytic cleavage. This is Protein RecA from Paenarthrobacter aurescens (strain TC1).